We begin with the raw amino-acid sequence, 38 residues long: Photosystem II reaction center protein L (38 aa).

The helical transmembrane segment at 17 to 37 (SLYFGLLLIFVLAVLFSSYIF) threads the bilayer.

It belongs to the PsbL family. PSII is composed of 1 copy each of membrane proteins PsbA, PsbB, PsbC, PsbD, PsbE, PsbF, PsbH, PsbI, PsbJ, PsbK, PsbL, PsbM, PsbT, PsbX, PsbY, PsbZ, Psb30/Ycf12, at least 3 peripheral proteins of the oxygen-evolving complex and a large number of cofactors. It forms dimeric complexes.

It is found in the plastid. Its subcellular location is the chloroplast thylakoid membrane. In terms of biological role, one of the components of the core complex of photosystem II (PSII). PSII is a light-driven water:plastoquinone oxidoreductase that uses light energy to abstract electrons from H(2)O, generating O(2) and a proton gradient subsequently used for ATP formation. It consists of a core antenna complex that captures photons, and an electron transfer chain that converts photonic excitation into a charge separation. This subunit is found at the monomer-monomer interface and is required for correct PSII assembly and/or dimerization. The chain is Photosystem II reaction center protein L from Chlamydomonas moewusii (Chlamydomonas eugametos).